The primary structure comprises 496 residues: Putative (R)-citramalate synthase CimA (496 aa).

The region spanning 3 to 253 is the Pyruvate carboxyltransferase domain; it reads VRVLDTTLRD…DTSINIEMLY (251 aa).

It belongs to the alpha-IPM synthase/homocitrate synthase family. As to quaternary structure, homodimer.

The enzyme catalyses pyruvate + acetyl-CoA + H2O = (3R)-citramalate + CoA + H(+). It participates in amino-acid biosynthesis; L-isoleucine biosynthesis; 2-oxobutanoate from pyruvate: step 1/3. Its function is as follows. Catalyzes the condensation of pyruvate and acetyl-coenzyme A to form (R)-citramalate. The chain is Putative (R)-citramalate synthase CimA from Methanothermobacter thermautotrophicus (strain ATCC 29096 / DSM 1053 / JCM 10044 / NBRC 100330 / Delta H) (Methanobacterium thermoautotrophicum).